The primary structure comprises 318 residues: Taste receptor type 2 member 60 (318 aa).

Residues 1–7 lie on the Extracellular side of the membrane; that stretch reads MNGDHMV. A helical membrane pass occupies residues 8-28; the sequence is LGSSMTDEKAIILVIILLLLC. At 29-40 the chain is on the cytoplasmic side; that stretch reads LVAIAGNCFITA. Residues 41-61 traverse the membrane as a helical segment; that stretch reads ALGMEWVLQRMLLPCDKLLVS. The Extracellular segment spans residues 62–88; sequence LGASRFCPQWVVMGKTTYVFLYPTAFP. Residues 89 to 109 form a helical membrane-spanning segment; sequence YNPVLRFLAFQWDLLNAATLW. Over 110 to 128 the chain is Cytoplasmic; sequence FSTWLSVFYCVKIATFTHP. Residues 129–149 traverse the membrane as a helical segment; that stretch reads VFLWLKHKLSEWVPWMLFSSV. Residues 150 to 183 lie on the Extracellular side of the membrane; it reads GLSSFTTILFFIGNHRVYQSYLRNHLQPWNVTGN. Residue N179 is glycosylated (N-linked (GlcNAc...) asparagine). A helical transmembrane segment spans residues 184–204; that stretch reads SIWSYCEKFYLFPLKMITWTM. The Cytoplasmic portion of the chain corresponds to 205–234; it reads PTAVFFICMILLITSLGRHMKKALLTNSGF. A helical membrane pass occupies residues 235 to 255; it reads RDPSVQAHIKAMLALLSFAML. Topologically, residues 256–264 are extracellular; the sequence is FISYFLSLV. The helical transmembrane segment at 265–285 threads the bilayer; it reads FSAAGIFPPLDFKFWVWESVI. Topologically, residues 286–318 are cytoplasmic; the sequence is YLCAAVHPIILLFSNRRLRAVLKRCRSSRCGTP.

Belongs to the G-protein coupled receptor T2R family.

Its subcellular location is the membrane. Its function is as follows. Receptor that may play a role in the perception of bitterness and is gustducin-linked. May play a role in sensing the chemical composition of the gastrointestinal content. The activity of this receptor may stimulate alpha gustducin, mediate PLC-beta-2 activation and lead to the gating of TRPM5. This Pongo pygmaeus (Bornean orangutan) protein is Taste receptor type 2 member 60 (TAS2R60).